The chain runs to 414 residues: Arrestin domain-containing protein 3 (414 aa).

2 consecutive short sequence motifs (PPxY motif) follow at residues P346–Y349 and P391–Y394. The disordered stretch occupies residues L393–R414. Positions A405 to R414 are enriched in basic and acidic residues.

It belongs to the arrestin family. Interacts (via PPxY motifs) with NEDD4 (via WW domains). Interacts with ADRB2. Interacts with ADRB3. Interacts with HGS (via PPxY motifs). Does not bind TXN (thioredoxin). Interacts with ITCH. Interacts with WWP1 (via WW domains). As to expression, highly expressed in skeletal muscle, placenta, kidney, lung, liver, blood, adrenal gland, lymph node, mammary gland, thyroid, and trachea. Very low levels in colon, thymus, spleen, small intestine, bladder and bone marrow. Strong expression in differentiated adipocytes compared to preadipocytes. Detected in omental fat and subcutaneous fat tissue.

The protein localises to the cytoplasm. It localises to the cell membrane. It is found in the lysosome. The protein resides in the endosome. Its subcellular location is the early endosome. Functionally, adapter protein that plays a role in regulating cell-surface expression of adrenergic receptors and probably also other G protein-coupled receptors. Plays a role in NEDD4-mediated ubiquitination and endocytosis af activated ADRB2 and subsequent ADRB2 degradation. May recruit NEDD4 to ADRB2. Alternatively, may function as adapter protein that does not play a major role in recruiting NEDD4 to ADRB2, but rather plays a role in a targeting ADRB2 to endosomes. This is Arrestin domain-containing protein 3 (ARRDC3) from Homo sapiens (Human).